Here is a 268-residue protein sequence, read N- to C-terminus: MTMTTNIFNAIILGIVEGITEFFPISSSGHLLIFTNILEMKNNEIKILNTIIQTGAALSILLHFKEKFVIFLEQIFICKQITKKNDLIYHHIILGNIPIIFIGLCIYQYIKYLSNFYSIIYALIFGTILLILTEISKTKISSNKNIETPQILIIGIFQCLALWPGFSRSCATISAGILSGLKQSKSVEFSFILSVPIFFGASVLDVINNFYDISINNIPMLFSGFLSAFITSNIVIKRCLNTMKNCSLIPFIIYRSILSIIIYLFFMH.

7 helical membrane-spanning segments follow: residues 7 to 27 (IFNAIILGIVEGITEFFPISS), 87 to 107 (LIYHHIILGNIPIIFIGLCIY), 116 to 136 (FYSIIYALIFGTILLILTEIS), 146 to 166 (IETPQILIIGIFQCLALWPGF), 187 to 207 (VEFSFILSVPIFFGASVLDVI), 210 to 230 (FYDISINNIPMLFSGFLSAFI), and 247 to 267 (SLIPFIIYRSILSIIIYLFFM).

The protein belongs to the UppP family.

The protein localises to the cell membrane. The enzyme catalyses di-trans,octa-cis-undecaprenyl diphosphate + H2O = di-trans,octa-cis-undecaprenyl phosphate + phosphate + H(+). Its function is as follows. Catalyzes the dephosphorylation of undecaprenyl diphosphate (UPP). Confers resistance to bacitracin. The sequence is that of Undecaprenyl-diphosphatase from Buchnera aphidicola subsp. Baizongia pistaciae (strain Bp).